The following is a 416-amino-acid chain: Phosphoglycerate kinase (416 aa).

Substrate contacts are provided by residues 24–26 (DLN), arginine 40, 63–66 (HLGR), arginine 122, and arginine 162. Residues lysine 212, glycine 300, glutamate 331, and 360-363 (GGDS) each bind ATP.

Belongs to the phosphoglycerate kinase family. Monomer.

It localises to the cytoplasm. The enzyme catalyses (2R)-3-phosphoglycerate + ATP = (2R)-3-phospho-glyceroyl phosphate + ADP. It functions in the pathway carbohydrate degradation; glycolysis; pyruvate from D-glyceraldehyde 3-phosphate: step 2/5. This is Phosphoglycerate kinase from Mycobacterium ulcerans (strain Agy99).